We begin with the raw amino-acid sequence, 1158 residues long: ATP-dependent helicase/deoxyribonuclease subunit B (1158 aa).

Residues methionine 1–asparagine 275 form the UvrD-like helicase ATP-binding domain. Glycine 8 to serine 15 serves as a coordination point for ATP. Residues asparagine 269 to valine 583 form the UvrD-like helicase C-terminal domain. Cysteine 784, cysteine 1112, cysteine 1115, and cysteine 1121 together coordinate [4Fe-4S] cluster.

This sequence belongs to the helicase family. AddB/RexB type 1 subfamily. Heterodimer of AddA and AddB. Requires Mg(2+) as cofactor. The cofactor is [4Fe-4S] cluster.

Functionally, the heterodimer acts as both an ATP-dependent DNA helicase and an ATP-dependent, dual-direction single-stranded exonuclease. Recognizes the chi site generating a DNA molecule suitable for the initiation of homologous recombination. The AddB subunit has 5' -&gt; 3' nuclease activity but not helicase activity. The sequence is that of ATP-dependent helicase/deoxyribonuclease subunit B from Staphylococcus aureus (strain COL).